The primary structure comprises 346 residues: Phosphoribosylformylglycinamidine cyclo-ligase (346 aa).

The protein belongs to the AIR synthase family.

It is found in the cytoplasm. The enzyme catalyses 2-formamido-N(1)-(5-O-phospho-beta-D-ribosyl)acetamidine + ATP = 5-amino-1-(5-phospho-beta-D-ribosyl)imidazole + ADP + phosphate + H(+). The protein operates within purine metabolism; IMP biosynthesis via de novo pathway; 5-amino-1-(5-phospho-D-ribosyl)imidazole from N(2)-formyl-N(1)-(5-phospho-D-ribosyl)glycinamide: step 2/2. The chain is Phosphoribosylformylglycinamidine cyclo-ligase from Bacillus licheniformis (strain ATCC 14580 / DSM 13 / JCM 2505 / CCUG 7422 / NBRC 12200 / NCIMB 9375 / NCTC 10341 / NRRL NRS-1264 / Gibson 46).